We begin with the raw amino-acid sequence, 37 residues long: Cytochrome b6-f complex subunit 5 (37 aa).

The helical transmembrane segment at 5–25 (FLFGIVLGLIPITLAGLFVTA) threads the bilayer.

It belongs to the PetG family. As to quaternary structure, the 4 large subunits of the cytochrome b6-f complex are cytochrome b6, subunit IV (17 kDa polypeptide, PetD), cytochrome f and the Rieske protein, while the 4 small subunits are PetG, PetL, PetM and PetN. The complex functions as a dimer.

The protein resides in the plastid thylakoid membrane. Its function is as follows. Component of the cytochrome b6-f complex, which mediates electron transfer between photosystem II (PSII) and photosystem I (PSI), cyclic electron flow around PSI, and state transitions. PetG is required for either the stability or assembly of the cytochrome b6-f complex. The polypeptide is Cytochrome b6-f complex subunit 5 (Cuscuta reflexa (Southern Asian dodder)).